Here is a 201-residue protein sequence, read N- to C-terminus: Two-component response regulator ORR9 (201 aa).

The region spanning 10–142 is the Response regulatory domain; that stretch reads HVLAVDDSLP…DMSKLKPHIL (133 aa). Position 75 is a 4-aspartylphosphate (aspartate 75). The disordered stretch occupies residues 149–201; it reads HYQQEQNLQSNSESNNSSNPTSENSSSSTSSNSHKRKAVDEEILPHTIRPRHS. A compositionally biased stretch (low complexity) spans 158–180; it reads SNSESNNSSNPTSENSSSSTSSN.

The protein belongs to the ARR family. Type-A subfamily. Post-translationally, two-component system major event consists of a His-to-Asp phosphorelay between a sensor histidine kinase (HK) and a response regulator (RR). In plants, the His-to-Asp phosphorelay involves an additional intermediate named Histidine-containing phosphotransfer protein (HPt). This multistep phosphorelay consists of a His-Asp-His-Asp sequential transfer of a phosphate group between first a His and an Asp of the HK protein, followed by the transfer to a conserved His of the HPt protein and finally the transfer to an Asp in the receiver domain of the RR protein.

Its function is as follows. Functions as a response regulator involved in His-to-Asp phosphorelay signal transduction system. Phosphorylation of the Asp residue in the receiver domain activates the ability of the protein to promote the transcription of target genes. Type-A response regulators seem to act as negative regulators of the cytokinin signaling. The polypeptide is Two-component response regulator ORR9 (Oryza sativa subsp. japonica (Rice)).